We begin with the raw amino-acid sequence, 278 residues long: uncharacterized protein (278 aa).

Positions 1-55 (MKIRERFSMVDLPVLIITAAIIGHDKYKAFHAGANDILQKPYHYSEFMARIQNLI) constitute a Response regulatory domain.

This is an uncharacterized protein from Bacillus subtilis (strain 168).